The sequence spans 407 residues: tRNA pseudouridine synthase 4 (407 aa).

Residues 83–105 (FRPAPPHPNDRNRRRRKSNRLPD) are disordered. The active-site Nucleophile is the D115. Residues 274-298 (TEQDINPQDGDEKINAKSPTTNSVT) are disordered. S291 carries the phosphoserine modification. The residue at position 293 (T293) is a Phosphothreonine. The residue at position 296 (S296) is a Phosphoserine. The residue at position 406 (T406) is a Phosphothreonine.

Belongs to the pseudouridine synthase TruB family.

The protein resides in the nucleus. The protein localises to the mitochondrion. The catalysed reaction is uridine(55) in tRNA = pseudouridine(55) in tRNA. The enzyme catalyses a uridine in mRNA = a pseudouridine in mRNA. Functionally, responsible for synthesis of pseudouridine from uracil-55 in the psi GC loop of transfer RNAs. Also catalyzes pseudouridylation of mRNAs with the consensus sequence 5'-GGUUCRA-3'. This chain is tRNA pseudouridine synthase 4, found in Schizosaccharomyces pombe (strain 972 / ATCC 24843) (Fission yeast).